Consider the following 750-residue polypeptide: Photosystem I P700 chlorophyll a apoprotein A1 (750 aa).

8 helical membrane-spanning segments follow: residues 70–93 (VFSAHFGQLSIIFLWLSGMYFHGA), 156–179 (LYCTGIGALVCAALMLFAGWFHYH), 195–219 (LNHHLAGLLGLGSLSWAGHQVHVSL), 291–309 (IAHHHLAIAILFLIAGHMY), 346–369 (WHAQLSLNLAMLGSLTIIVAHHMY), 385–411 (LSLFTHHMWIGGFLIVGAAAHAAIFMV), 433–455 (AIISHLNWVCIFLGFHSFGLYIH), and 531–549 (FLVHHIHAFTIHVPVLILL). 2 residues coordinate [4Fe-4S] cluster: C573 and C582. The next 2 helical transmembrane spans lie at 589–610 (HVFLGLFWMYNAISVVIFHFSW) and 664–686 (LSAYGLFFLGAHFVWAFSLMFLF). H675 lines the chlorophyll a' pocket. Positions 683 and 691 each coordinate chlorophyll a. W692 lines the phylloquinone pocket. A helical transmembrane segment spans residues 724–744 (AVGVTHYLLGGIATTWAFFLA).

The protein belongs to the PsaA/PsaB family. The PsaA/B heterodimer binds the P700 chlorophyll special pair and subsequent electron acceptors. PSI consists of a core antenna complex that captures photons, and an electron transfer chain that converts photonic excitation into a charge separation. The eukaryotic PSI reaction center is composed of at least 11 subunits. It depends on P700 is a chlorophyll a/chlorophyll a' dimer, A0 is one or more chlorophyll a, A1 is one or both phylloquinones and FX is a shared 4Fe-4S iron-sulfur center. as a cofactor.

Its subcellular location is the plastid. It is found in the chloroplast thylakoid membrane. It catalyses the reaction reduced [plastocyanin] + hnu + oxidized [2Fe-2S]-[ferredoxin] = oxidized [plastocyanin] + reduced [2Fe-2S]-[ferredoxin]. In terms of biological role, psaA and PsaB bind P700, the primary electron donor of photosystem I (PSI), as well as the electron acceptors A0, A1 and FX. PSI is a plastocyanin-ferredoxin oxidoreductase, converting photonic excitation into a charge separation, which transfers an electron from the donor P700 chlorophyll pair to the spectroscopically characterized acceptors A0, A1, FX, FA and FB in turn. Oxidized P700 is reduced on the lumenal side of the thylakoid membrane by plastocyanin. The polypeptide is Photosystem I P700 chlorophyll a apoprotein A1 (Crucihimalaya wallichii (Rock-cress)).